Reading from the N-terminus, the 228-residue chain is Glucose-induced degradation protein 8 homolog (228 aa).

Residues serine 29–threonine 61 enclose the LisH domain. One can recognise a CTLH domain in the interval serine 67–glutamate 124.

This sequence belongs to the GID8 family.

It localises to the cytoplasm. The protein localises to the nucleus. In terms of biological role, core component of the CTLH E3 ubiquitin-protein ligase complex that mediates ubiquitination and subsequent proteasomal degradation of target proteins. Acts as a positive regulator of Wnt signaling pathway by promoting beta-catenin (CTNNB1) nuclear accumulation. The protein is Glucose-induced degradation protein 8 homolog of Dictyostelium discoideum (Social amoeba).